Here is a 473-residue protein sequence, read N- to C-terminus: SHC-transforming protein 1 (473 aa).

Residues 1–26 are disordered; it reads MNKLSGGGGRRTRVEGGQLGGEEWTR. Position 29 is a phosphoserine (S29). Position 44 is an N6-acetyllysine (K44). The PID domain maps to 46–229; the sequence is MGPGVSYLVR…AGFDGSAWDE (184 aa). Residues 216–314 are disordered; that stretch reads HDRMAGFDGS…PSSGRELFDD (99 aa). Residues 230–377 are CH1; the sequence is EEEEPPDHQY…AMAEQLRGEP (148 aa). Phosphotyrosine occurs at positions 239, 240, and 317. The tract at residues 328–348 is disordered; the sequence is QAGAGAGPPNPTINGSAPRDL. S343 carries the phosphoserine modification. One can recognise an SH2 domain in the interval 378-469; sequence WFHGKLSRRE…GSELCLQQPV (92 aa).

Interacts with CPNE3; this interaction may mediate the binding of CPNE3 with ERBB2. Interacts with the Trk receptors NTRK1, NTRK2 and NTRK3; in a phosphotyrosine-dependent manner. Interacts with the NPXY motif of tyrosine-phosphorylated IGF1R and INSR in vitro via the PID domain. Once activated, binds to GRB2. Interacts with tyrosine-phosphorylated CD3T and DDR2. Interacts with the N-terminal region of APS. Interacts with phosphorylated LRP1 and IRS4. Interacts with INPP5D/SHIP1 and INPPL1/SHIP2. Interacts with ALK, GAB2, GRB7 and KIT. Interacts with PTPN6/SHP (tyrosine phosphorylated). Identified in a complex containing FGFR4, NCAM1, CDH2, PLCG1, FRS2, SRC, SHC1, GAP43 and CTTN. Interacts with FLT4 (tyrosine-phosphorylated). Interacts with EPHB1 and GRB2; activates the MAPK/ERK cascade to regulate cell migration. Interacts with PDGFRB (tyrosine-phosphorylated). Interacts with ERBB4. Interacts with TEK/TIE2 (tyrosine-phosphorylated). Interacts with PTK2/FAK1. Interacts with CEACAM1; this interaction is CEACAM1-phosphorylation-dependent and mediates interaction with EGFR or INSR resulting in decrease coupling of SHC1 to the MAPK3/ERK1-MAPK1/ERK2 pathway. Interacts (via PID domain) with PEAK1 (when phosphorylated). Found in a complex with PPP1CA, PPP1CC, SHC1 and PEAK1. Post-translationally, phosphorylated by activated epidermal growth factor receptor. Phosphorylated in response to KIT signaling. Tyrosine phosphorylated in response to FLT3 and FLT4 signaling and by ligand-activated ALK. Tyrosine phosphorylated by ligand-activated PDGFRB. Tyrosine phosphorylated by TEK/TIE2. May be tyrosine phosphorylated by activated PTK2/FAK1. Tyrosine phosphorylated by activated PTK2B/PYK2. Dephosphorylation by PTPN2 may regulate interaction with GRB2.

The protein resides in the cytoplasm. The protein localises to the cell junction. Its subcellular location is the focal adhesion. Functionally, signaling adapter that couples activated growth factor receptors to signaling pathways. Participates in a signaling cascade initiated by activated KIT and KITLG/SCF. Participates in signaling downstream of the angiopoietin receptor TEK/TIE2, and plays a role in the regulation of endothelial cell migration and sprouting angiogenesis. The sequence is that of SHC-transforming protein 1 (SHC1) from Bos taurus (Bovine).